The primary structure comprises 267 residues: UPF0328 protein ECU06_0070 (267 aa).

Belongs to the UPF0328 family.

The chain is UPF0328 protein ECU06_0070 from Encephalitozoon cuniculi (strain GB-M1) (Microsporidian parasite).